Here is a 212-residue protein sequence, read N- to C-terminus: Ropporin-1 (212 aa).

The RIIa domain maps to 12 to 43 (PELPELLKQFTKDAIRTQPPDLIQWAAEYFGA). S56 carries the phosphoserine modification. An interaction with RHPN1 region spans residues 209–212 (VRLE).

It belongs to the ropporin family. In terms of assembly, homodimer. Interacts with AKAP3. May interact with SPA17. Interacts with RHPN1. Interacts with FSCB; the interaction increases upon spermatozoa capacitation conditions. Interacts with CFAP61. Post-translationally, sumoylated, sumoylation decreases upon spermatozoa capacitation conditions. Testis-specific. Present in the most inner parts of seminiferous tubules (at protein level).

It localises to the cell projection. The protein resides in the cilium. The protein localises to the flagellum. Its function is as follows. Important for male fertility. With ROPN1L, involved in fibrous sheath integrity and sperm motility, plays a role in PKA-dependent signaling processes required for spermatozoa capacitation. The sequence is that of Ropporin-1 (Ropn1) from Mus musculus (Mouse).